A 375-amino-acid polypeptide reads, in one-letter code: Beta sliding clamp (375 aa).

It belongs to the beta sliding clamp family. As to quaternary structure, forms a ring-shaped head-to-tail homodimer around DNA which binds and tethers DNA polymerases and other proteins to the DNA. The DNA replisome complex has a single clamp-loading complex (3 tau and 1 each of delta, delta', psi and chi subunits) which binds 3 Pol III cores (1 core on the leading strand and 2 on the lagging strand) each with a beta sliding clamp dimer. Additional proteins in the replisome are other copies of gamma, psi and chi, Ssb, DNA helicase and RNA primase.

It is found in the cytoplasm. In terms of biological role, confers DNA tethering and processivity to DNA polymerases and other proteins. Acts as a clamp, forming a ring around DNA (a reaction catalyzed by the clamp-loading complex) which diffuses in an ATP-independent manner freely and bidirectionally along dsDNA. Initially characterized for its ability to contact the catalytic subunit of DNA polymerase III (Pol III), a complex, multichain enzyme responsible for most of the replicative synthesis in bacteria; Pol III exhibits 3'-5' exonuclease proofreading activity. The beta chain is required for initiation of replication as well as for processivity of DNA replication. This Mycoplasma capricolum subsp. capricolum (strain California kid / ATCC 27343 / NCTC 10154) protein is Beta sliding clamp (dnaN).